We begin with the raw amino-acid sequence, 233 residues long: Antiholin-like protein LrgB (233 aa).

A run of 6 helical transmembrane segments spans residues 5–25 (LGIN…VIAT), 33–53 (GFFL…FLKL), 63–83 (IGGD…AIPL), 97–117 (IFGG…LVAI), 152–172 (LTSL…AKIV), and 212–232 (IAVV…APIL).

It belongs to the CidB/LrgB family. LrgB subfamily.

It is found in the cell membrane. Its function is as follows. Inhibits the expression or activity of extracellular murein hydrolases by interacting, possibly with LrgA, with the holin-like proteins CidA and/or CidB. The LrgAB and CidAB proteins may affect the proton motive force of the membrane. May be involved in programmed cell death (PCD), possibly triggering PCD in response to antibiotics and environmental stresses. The chain is Antiholin-like protein LrgB from Staphylococcus epidermidis (strain ATCC 35984 / DSM 28319 / BCRC 17069 / CCUG 31568 / BM 3577 / RP62A).